The primary structure comprises 150 residues: 1,4-dihydroxy-2-naphthoyl-CoA hydrolase (150 aa).

Residue aspartate 19 is part of the active site.

It belongs to the 4-hydroxybenzoyl-CoA thioesterase family. DHNA-CoA hydrolase subfamily.

The enzyme catalyses 1,4-dihydroxy-2-naphthoyl-CoA + H2O = 1,4-dihydroxy-2-naphthoate + CoA + H(+). It participates in cofactor biosynthesis; phylloquinone biosynthesis. It functions in the pathway quinol/quinone metabolism; 1,4-dihydroxy-2-naphthoate biosynthesis; 1,4-dihydroxy-2-naphthoate from chorismate: step 7/7. Functionally, catalyzes the hydrolysis of 1,4-dihydroxy-2-naphthoyl-CoA (DHNA-CoA) to 1,4-dihydroxy-2-naphthoate (DHNA), a reaction involved in phylloquinone (vitamin K1) biosynthesis. In Prochlorococcus marinus (strain MIT 9312), this protein is 1,4-dihydroxy-2-naphthoyl-CoA hydrolase.